Consider the following 211-residue polypeptide: Outer-membrane lipoprotein carrier protein (211 aa).

Positions 1–25 (MRAIRMLLVSALTLGSLSATLSAHA) are cleaved as a signal peptide.

The protein belongs to the LolA family. In terms of assembly, monomer.

It localises to the periplasm. Its function is as follows. Participates in the translocation of lipoproteins from the inner membrane to the outer membrane. Only forms a complex with a lipoprotein if the residue after the N-terminal Cys is not an aspartate (The Asp acts as a targeting signal to indicate that the lipoprotein should stay in the inner membrane). The protein is Outer-membrane lipoprotein carrier protein of Pseudomonas putida (strain W619).